Consider the following 556-residue polypeptide: Formate--tetrahydrofolate ligase (556 aa).

T65 to T72 contacts ATP.

Belongs to the formate--tetrahydrofolate ligase family.

The enzyme catalyses (6S)-5,6,7,8-tetrahydrofolate + formate + ATP = (6R)-10-formyltetrahydrofolate + ADP + phosphate. It functions in the pathway one-carbon metabolism; tetrahydrofolate interconversion. The chain is Formate--tetrahydrofolate ligase from Hyphomonas neptunium (strain ATCC 15444).